A 95-amino-acid chain; its full sequence is Small ribosomal subunit protein bS20 (95 aa).

The protein belongs to the bacterial ribosomal protein bS20 family.

In terms of biological role, binds directly to 16S ribosomal RNA. The sequence is that of Small ribosomal subunit protein bS20 from Ehrlichia canis (strain Jake).